Reading from the N-terminus, the 91-residue chain is MPTVLSRMAMQLKKTAWIIPVFMVSGCSLSPAIPVIGAYYPGWFFCAIASLILTLITRRIIQRTNINLAFVGIIYTALFALYAMLFWLAFF.

Positions 1-26 (MPTVLSRMAMQLKKTAWIIPVFMVSG) are cleaved as a signal peptide. Cys27 carries N-palmitoyl cysteine lipidation. The S-diacylglycerol cysteine moiety is linked to residue Cys27. Transmembrane regions (helical) follow at residues 33–53 (IPVIGAYYPGWFFCAIASLIL) and 70–90 (FVGIIYTALFALYAMLFWLAF).

This sequence belongs to the YtcA family.

The protein localises to the cell membrane. Its subcellular location is the membrane. This is an uncharacterized protein from Escherichia coli O1:K1 / APEC.